A 75-amino-acid polypeptide reads, in one-letter code: U-stichotoxin-Hau3a (75 aa).

An N-terminal signal peptide occupies residues 1–19 (MNHLIILVVAAVFLGMASA). Residues 20–26 (EDVFHKR) constitute a propeptide that is removed on maturation. Intrachain disulfides connect Cys31–Cys71, Cys33–Cys61, and Cys54–Cys72.

The protein belongs to the sea anemone sodium channel inhibitory toxin family. Type I subfamily. Post-translationally, contains 3 disulfide bonds.

It is found in the secreted. The protein localises to the nematocyst. Its function is as follows. Toxin that is lethal to crab. This Heteractis aurora (Banded sea anemone) protein is U-stichotoxin-Hau3a.